Reading from the N-terminus, the 741-residue chain is MRWILFILFCLLGAPAHAVSIPGVTTTTTTDSTTEPAPEPDIEQKKAAYGALADVLDNDTSRKELIDQLRTVAATPPAEPVPKIVPPTLVEEQTVLQKVTEVSRHYGEALSARFGQLYRNITGSPHKPFNPQTFSNALTHFSMLAVLVFGFYWLIRLCALPLYRKMGQWARQKNRERSNWLQLPAMIIGAFIIDLLLLALTLFVGQVLSDNLNAGSRTIAFQQSLFLNAFALIEFFKAVLRLIFCPNVAELRPFTIQDESARYWSRRLSWLSSLIGYGLIVAVPIISNQVNVQIGALANVIIMLCMTVWALYLIFRNKKEITQHLLNFAEHSLAFFSLFIRAFALVWHWLASAYFIVLFFFSLFDPGNSLKFMMGATVRSLAIIGIAAFVSGMFSRWLAKTITLSPHTQRNYPELQKRLNGWLSAALKTARILTVCVAVMLLLSAWGLFDFWNWLQNGAGQKTVDILIRIALILFFSAVGWTVLASLIENRLASDIHGRPLPSARTRTLLTLFRNALAVIISTITIMIVLSEIGVNIAPLLAGAGALGLAISFGSQTLVKDIITGVFIQFENGMNTGDLVTIGPLTGTVERMSIRSVGVRQDTGAYHIIPWSSITTFANFVRGIGSVVANYDVDRHEDADKANQALKDAVAELMENEEIRGLIIGEPNFAGIVGLSNTAFTLRVSFTTLPLKQWTVRFALDSQVKKHFDLAGVRAPVQTYQVLPAPGATPAEPLPPGEPTL.

A signal peptide spans 1–18 (MRWILFILFCLLGAPAHA). Residues 22–42 (PGVTTTTTTDSTTEPAPEPDI) form a disordered region. Over residues 25–34 (TTTTTTDSTT) the composition is skewed to low complexity. 11 helical membrane passes run 143–163 (MLAV…LPLY), 185–205 (AMII…LFVG), 225–245 (LFLN…LIFC), 268–288 (LSWL…IISN), 294–314 (IGAL…LYLI), 343–363 (FALV…FFSL), 372–392 (FMMG…FVSG), 432–452 (ILTV…FDFW), 466–486 (ILIR…VLAS), 509–529 (LLTL…IMIV), and 533–553 (IGVN…AISF).

Belongs to the MscS (TC 1.A.23) family. As to quaternary structure, homoheptamer.

The protein localises to the cell inner membrane. Functionally, mechanosensitive channel that protects cells against hypoosmotic stress when highly overexpressed. The protein is Moderate conductance mechanosensitive channel YbiO (ybiO) of Escherichia coli (strain K12).